The chain runs to 733 residues: Putative cyclic nucleotide-gated ion channel 9 (733 aa).

At 1–117 (MLDCGKKAVK…DKFLLLCNKL (117 aa)) the chain is on the cytoplasmic side. Residues 118–138 (FVTSCILAVSVDPLFLYLPFV) traverse the membrane as a helical segment. Over 139 to 151 (KDNEKCIGIDRKL) the chain is Extracellular. Residues 152-172 (AIIATTLRTVIDAFYLFHMAL) form a helical membrane-spanning segment. Topologically, residues 173–207 (RFRTAFVAPSSRVFGRGELVIDPAQIAKRYLQQYF) are cytoplasmic. A helical membrane pass occupies residues 208–228 (IIDFLSVLPLPQIVVWRFLYI). Residues 229–239 (SKGASVLATKR) are Extracellular-facing. A helical membrane pass occupies residues 240–260 (ALRSIILVQYIPRFIRLYPLS). The Cytoplasmic portion of the chain corresponds to 261–280 (SELKRTAGVFAETAWAGAAY). A helical transmembrane segment spans residues 281–301 (YLLLYMLASHIVGAIWYLLAL). Residues 302–406 (ERYNGCWTKV…GQGLETSTYP (105 aa)) are Extracellular-facing. Residues 407–427 (GEVIFSIALAIAGLLLFALLI) traverse the membrane as a helical segment. Over 428 to 733 (GNMQTYLQSL…EPDFSADDTS (306 aa)) the chain is Cytoplasmic. Residues 513–637 (LFEN…SRQV) and E584 contribute to the a nucleoside 3',5'-cyclic phosphate site. Positions 629–644 (FRRLHSRQVQHTFRFY) are calmodulin-binding. Residues 649-678 (RTWAAIFIQAAWRRYVKKKKLEQLRKEEEE) form the IQ domain.

Belongs to the cyclic nucleotide-gated cation channel (TC 1.A.1.5) family. As to quaternary structure, homotetramer or heterotetramer.

It is found in the cell membrane. In terms of biological role, putative cyclic nucleotide-gated ion channel. The sequence is that of Putative cyclic nucleotide-gated ion channel 9 (CNGC9) from Arabidopsis thaliana (Mouse-ear cress).